The following is a 198-amino-acid chain: MTEHCASDISDVSCPPRGRVIVGVVLGLAGTGALIGGLWAWIAPPIHAVVGLTRTGERGHDYLGNESEHFFVAPCLMLGLLTVLAVTASVLAWQLRQHRGPGMVIGLAIGLMICAATAAAVGALLVWMRYGALNFDAVPLSYDHKVAHVIQAPPVFFAHGLLQVAATVLWPAGIAALVYAVLAAANGRDDLGGRLCSR.

4 helical membrane-spanning segments follow: residues 20–40 (VIVG…GLWA), 70–90 (FFVA…TASV), 107–127 (LAIG…LLVW), and 164–184 (VAAT…VLAA).

This sequence to M.tuberculosis Rv1591.

Its subcellular location is the cell membrane. This is an uncharacterized protein from Mycobacterium leprae (strain TN).